Here is a 160-residue protein sequence, read N- to C-terminus: Large ribosomal subunit protein eL21 (160 aa).

It belongs to the eukaryotic ribosomal protein eL21 family. As to quaternary structure, component of the large ribosomal subunit. Mature ribosomes consist of a small (40S) and a large (60S) subunit. The 40S subunit contains about 32 different proteins and 1 molecule of RNA (18S). The 60S subunit contains 45 different proteins and 3 molecules of RNA (25S, 5.8S and 5S).

The protein resides in the cytoplasm. In terms of biological role, component of the ribosome, a large ribonucleoprotein complex responsible for the synthesis of proteins in the cell. The small ribosomal subunit (SSU) binds messenger RNAs (mRNAs) and translates the encoded message by selecting cognate aminoacyl-transfer RNA (tRNA) molecules. The large subunit (LSU) contains the ribosomal catalytic site termed the peptidyl transferase center (PTC), which catalyzes the formation of peptide bonds, thereby polymerizing the amino acids delivered by tRNAs into a polypeptide chain. The nascent polypeptides leave the ribosome through a tunnel in the LSU and interact with protein factors that function in enzymatic processing, targeting, and the membrane insertion of nascent chains at the exit of the ribosomal tunnel. The chain is Large ribosomal subunit protein eL21 from Candida albicans (strain SC5314 / ATCC MYA-2876) (Yeast).